A 985-amino-acid chain; its full sequence is Regulator of telomere elongation helicase 1 homolog (985 aa).

The 297-residue stretch at 7–303 (AGIPVHFPFE…QDMAGDEPKD (297 aa)) folds into the Helicase ATP-binding domain. 42–49 (SPTGTGKT) contacts ATP. 4 residues coordinate [4Fe-4S] cluster: Cys-146, Cys-164, Cys-173, and Cys-209. The DEAH box motif lies at 252 to 255 (DEAH). The residue at position 874 (Thr-874) is a Phosphothreonine.

Belongs to the helicase family. RAD3/XPD subfamily.

It is found in the nucleus. It carries out the reaction ATP + H2O = ADP + phosphate + H(+). Functionally, a probable ATP-dependent DNA helicase implicated in DNA repair and the maintenance of genomic stability. Acts as an anti-recombinase to counteract toxic recombination and limit crossover during meiosis. Regulates meiotic recombination and crossover homeostasis by physically dissociating strand invasion events and thereby promotes noncrossover repair by meiotic synthesis dependent strand annealing (SDSA) as well as disassembly of D loop recombination intermediates. The protein is Regulator of telomere elongation helicase 1 homolog of Drosophila erecta (Fruit fly).